We begin with the raw amino-acid sequence, 1422 residues long: FH1/FH2 domain-containing protein 3 (1422 aa).

In terms of domain architecture, GBD/FH3 spans 18–411 (NSTNFPEPSR…NFGNNSYHSS (394 aa)). Disordered regions lie at residues 323 to 464 (RHED…RRRQ), 521 to 666 (ACLA…GVNG), 687 to 708 (RKSPDDEEKGDGEAGRTQQEAE), 754 to 781 (SGDLGRGSISPDAEPNDKVPETAPVQPK), 821 to 849 (LGHREAPGPPPPPPPTFLGLPPPPPPPLL), 1262 to 1305 (QQKQ…SYAE), 1320 to 1357 (SSPSVEDATPALGVRTRSRASRGSTSSWTMGTDDSPNV), and 1374 to 1410 (TQVPSQRVVPRERKRSRANRKSLRRTLKSGLTPEEAR). At S345 the chain carries Phosphoserine. The span at 357–366 (LDRRRSRRHS) shows a compositional bias: basic residues. Residues 367–390 (VQSIKSTLSAPTSPCSQSAPSFKP) show a composition bias toward polar residues. The residue at position 375 (S375) is a Phosphoserine. The segment covering 410 to 430 (SSRPSSGSSVPTTPTSSVSPP) has biased composition (low complexity). The segment covering 438 to 449 (SSPSGLLTSSFR) has biased composition (polar residues). Residues 448–480 (FRQHQESLAAERERRRQEREERLQRIEREERNK) are a coiled coil. Basic and acidic residues predominate over residues 450–464 (QHQESLAAERERRRQ). Residues 521–535 (ACLAPLSHSPSSSDS) show a composition bias toward low complexity. Polar residues predominate over residues 536–547 (QEALTVSASSPG). Acidic residues-rich tracts occupy residues 559–569 (PEPESEAEPEA) and 592–603 (ETEVEQALEQEP). Basic and acidic residues predominate over residues 604-624 (EERASLSEKERQNEGVNERDN). The segment covering 626–635 (SASSVSSSSS) has biased composition (low complexity). A compositionally biased stretch (basic and acidic residues) spans 637–651 (LEREEKEDKLSRDRT). Position 763 is a phosphoserine (S763). T775 carries the phosphothreonine modification. Residues 827-849 (PGPPPPPPPTFLGLPPPPPPPLL) show a composition bias toward pro residues. The region spanning 827–858 (PGPPPPPPPTFLGLPPPPPPPLLDSIPPPPVP) is the FH1 domain. The region spanning 883–1279 (GQPTFTKKKK…HRERNKTRGK (397 aa)) is the FH2 domain. Residues 1264–1278 (KQKRANHRERNKTRG) are compositionally biased toward basic residues. Positions 1359-1391 (DDAADEIMDRIVKSATQVPSQRVVPRERKRSRA) constitute a DAD domain. Residues 1385 to 1400 (ERKRSRANRKSLRRTL) are compositionally biased toward basic residues.

The protein belongs to the formin homology family. As to quaternary structure, interacts with nestin/NES-based interfilament (IF). Interacts with SQSTM1; isoform 4 threonine phosphorylation disrupts SQSTM1-binding. In terms of processing, phosphorylated on Thr-1474 and Thr-1476 by CK2. In terms of tissue distribution, expressed in the heart, kidney and brain. May be down-regulated in various types of heart diseases, including idiopathic dilated, ventricular dilated, familial dilated and perinatal dilated cardiomyopathies, as well as ischemic heart disease (at protein level).

The protein localises to the cytoplasm. It is found in the cytoskeleton. It localises to the myofibril. The protein resides in the sarcomere. Its subcellular location is the z line. Actin-organizing protein that may cause stress fiber formation together with cell elongation. Isoform 4 may play a role in actin filament polymerization in cardiomyocytes. In Homo sapiens (Human), this protein is FH1/FH2 domain-containing protein 3 (FHOD3).